A 440-amino-acid chain; its full sequence is Sialyltransferase-like protein 2 (440 aa).

Residues 1–5 lie on the Cytoplasmic side of the membrane; the sequence is MKLLH. Residues 6–26 traverse the membrane as a helical; Signal-anchor for type II membrane protein segment; that stretch reads LIFLLALTTGISAVLIYIIGV. Residues 27 to 440 lie on the Lumenal side of the membrane; that stretch reads SNLYESNRFT…HGQLCITPAD (414 aa). N-linked (GlcNAc...) asparagine glycans are attached at residues Asn-113 and Asn-149.

Belongs to the glycosyltransferase 29 family.

Its subcellular location is the golgi apparatus membrane. May be involved in the transfer of 2-keto-3-deoxy-D-lyxo-heptulosaric acid (Dha) and/or 2-keto-3-deoxy-D-manno-octulosonic acid (Kdo) on the homogalacturonan backbone of rhamnogalacturonan-II. Required for efficient pollen grain germination and pollen tube elongation. Does not possess sialyltransferase activity in vitro. The protein is Sialyltransferase-like protein 2 of Arabidopsis thaliana (Mouse-ear cress).